The chain runs to 393 residues: Protein TsgA (393 aa).

12 helical membrane passes run 11-31 (WISF…GMVM), 51-71 (FLNA…EIVP), 78-98 (FGFI…SLAL), 101-121 (AAMF…TFLI), 134-154 (LLFT…VAAF), 162-182 (WYWV…LTFG), 206-226 (IGVL…LGFI), 245-265 (ALVS…SFIL), 273-293 (ILTV…TGTQ), 298-318 (WFIL…ITLG), 332-352 (FILT…GPIV), and 361-381 (LLTA…LGFV).

It belongs to the major facilitator superfamily. TsgA family.

The protein resides in the cell inner membrane. The polypeptide is Protein TsgA (Salmonella gallinarum (strain 287/91 / NCTC 13346)).